The primary structure comprises 138 residues: Lactoylglutathione lyase (138 aa).

Residues 2–126 (RLLHTMLRVG…DGYKIEFIQK (125 aa)) enclose the VOC domain. H5 lines the Ni(2+) pocket. R9 is a binding site for substrate. A Ni(2+)-binding site is contributed by E56. Residues N60 and H74 each coordinate substrate. 2 residues coordinate Ni(2+): H74 and E122. The active-site Proton donor/acceptor is the E122.

Belongs to the glyoxalase I family. The cofactor is Ni(2+).

It carries out the reaction (R)-S-lactoylglutathione = methylglyoxal + glutathione. It participates in secondary metabolite metabolism; methylglyoxal degradation; (R)-lactate from methylglyoxal: step 1/2. Catalyzes the conversion of hemimercaptal, formed from methylglyoxal and glutathione, to S-lactoylglutathione. The chain is Lactoylglutathione lyase (gloA) from Neisseria meningitidis serogroup A / serotype 4A (strain DSM 15465 / Z2491).